Reading from the N-terminus, the 530-residue chain is Bifunctional purine biosynthesis protein PurH (530 aa).

Positions 1–148 (MNNPRPIRRA…KNHKDVTIVV (148 aa)) constitute an MGS-like domain.

Belongs to the PurH family.

It catalyses the reaction (6R)-10-formyltetrahydrofolate + 5-amino-1-(5-phospho-beta-D-ribosyl)imidazole-4-carboxamide = 5-formamido-1-(5-phospho-D-ribosyl)imidazole-4-carboxamide + (6S)-5,6,7,8-tetrahydrofolate. It carries out the reaction IMP + H2O = 5-formamido-1-(5-phospho-D-ribosyl)imidazole-4-carboxamide. The protein operates within purine metabolism; IMP biosynthesis via de novo pathway; 5-formamido-1-(5-phospho-D-ribosyl)imidazole-4-carboxamide from 5-amino-1-(5-phospho-D-ribosyl)imidazole-4-carboxamide (10-formyl THF route): step 1/1. It functions in the pathway purine metabolism; IMP biosynthesis via de novo pathway; IMP from 5-formamido-1-(5-phospho-D-ribosyl)imidazole-4-carboxamide: step 1/1. The sequence is that of Bifunctional purine biosynthesis protein PurH from Aliivibrio salmonicida (strain LFI1238) (Vibrio salmonicida (strain LFI1238)).